We begin with the raw amino-acid sequence, 342 residues long: uncharacterized protein (342 aa).

The 171-residue stretch at 3–173 (IAIRGGHNFL…LIGYLIAKGI (171 aa)) folds into the MurNAc-LAA domain.

It to C.perfringens CPE1502.

This is an uncharacterized protein from Clostridium perfringens.